The following is a 239-amino-acid chain: Transcriptional regulatory protein BtsR (239 aa).

One can recognise a Response regulatory domain in the interval 3–116 (KVLIVDDEPL…RLEKTLHRLR (114 aa)). Asp-54 bears the 4-aspartylphosphate mark. Positions 137–239 (IPCTGHSRIY…LKSLKEAIGL (103 aa)) constitute an HTH LytTR-type domain.

Phosphorylated by BtsS.

Member of the two-component regulatory system BtsS/BtsR. BtsR regulates expression of btsT by binding to its promoter region. This is Transcriptional regulatory protein BtsR from Salmonella typhi.